A 396-amino-acid polypeptide reads, in one-letter code: Decapping and exoribonuclease protein (396 aa).

Residues 1–20 show a composition bias toward basic and acidic residues; sequence MDPRGTKRGAEKTEVAEPRN. The interval 1–37 is disordered; the sequence is MDPRGTKRGAEKTEVAEPRNKLPRPAPSLPTDPALYS. Residues Arg-58, Glu-101, and 131-133 each bind substrate; that span reads WRG. Glu-192 provides a ligand contact to Mg(2+). 2 residues coordinate substrate: Cys-217 and Glu-234. Mg(2+) contacts are provided by Glu-234, Asp-236, Glu-253, and Leu-254. Substrate-binding residues include Lys-255 and Gln-280. Thr-392 is modified (phosphothreonine). Residue Ser-394 is modified to Phosphoserine.

The protein belongs to the DXO/Dom3Z family. Requires Mg(2+) as cofactor. In terms of tissue distribution, ubiquitously expressed.

It is found in the nucleus. It carries out the reaction a 5'-end triphospho-ribonucleoside in mRNA + H2O = a 5'-end phospho-ribonucleoside in mRNA + diphosphate + H(+). It catalyses the reaction a 5'-end NAD(+)-phospho-ribonucleoside in mRNA + H2O = a 5'-end phospho-ribonucleoside in mRNA + NAD(+) + H(+). The enzyme catalyses a 5'-end NAD(+)-phospho-ribonucleoside in snoRNA + H2O = a 5'-end phospho-ribonucleoside in snoRNA + NAD(+) + H(+). The catalysed reaction is a 5'-end (N(7)-methyl 5'-triphosphoguanosine)-ribonucleoside-ribonucleotide in mRNA + H2O = a (N(7)-methyl 5'-triphosphoguanosine)-nucleoside + a 5'-end phospho-ribonucleoside in mRNA + H(+). It carries out the reaction a 5'-end FAD-phospho-ribonucleoside in mRNA + H2O = a 5'-end phospho-ribonucleoside in mRNA + FAD + H(+). It catalyses the reaction a 5'-end CoA-ribonucleoside in mRNA + H2O = 3'-dephospho-CoA + a 5'-end phospho-ribonucleoside in mRNA + H(+). Functionally, decapping enzyme for NAD-capped RNAs: specifically hydrolyzes the nicotinamide adenine dinucleotide (NAD) cap from a subset of RNAs by removing the entire NAD moiety from the 5'-end of an NAD-capped RNA. The NAD-cap is present at the 5'-end of some RNAs and snoRNAs. In contrast to the canonical 5'-end N7 methylguanosine (m7G) cap, the NAD cap promotes mRNA decay. Preferentially acts on NAD-capped transcripts in response to environmental stress. Also acts as a non-canonical decapping enzyme that removes the entire cap structure of m7G capped or incompletely capped RNAs and mediates their subsequent degradation. Specifically degrades pre-mRNAs with a defective 5'-end m7G cap and is part of a pre-mRNA capping quality control. Has decapping activity toward incomplete 5'-end m7G cap mRNAs such as unmethylated 5'-end-capped RNA (cap0), while it has no activity toward 2'-O-ribose methylated m7G cap (cap1). In contrast to canonical decapping enzymes DCP2 and NUDT16, which cleave the cap within the triphosphate linkage, the decapping activity releases the entire cap structure GpppN and a 5'-end monophosphate RNA. Also has 5'-3' exoribonuclease activities: The 5'-end monophosphate RNA is then degraded by the 5'-3' exoribonuclease activity, enabling this enzyme to decap and degrade incompletely capped mRNAs. Also possesses RNA 5'-pyrophosphohydrolase activity by hydrolyzing the 5'-end triphosphate to release pyrophosphates. Exhibits decapping activity towards FAD-capped RNAs. Exhibits decapping activity towards dpCoA-capped RNAs in vitro. This chain is Decapping and exoribonuclease protein, found in Homo sapiens (Human).